Consider the following 420-residue polypeptide: L-rhamnose isomerase (420 aa).

Mn(2+)-binding residues include H264, D296, and D298.

The protein belongs to the rhamnose isomerase family. It depends on Mn(2+) as a cofactor.

It localises to the cytoplasm. It catalyses the reaction L-rhamnopyranose = L-rhamnulose. It functions in the pathway carbohydrate degradation; L-rhamnose degradation; glycerone phosphate from L-rhamnose: step 1/3. Functionally, catalyzes the interconversion of L-rhamnose and L-rhamnulose. In Listeria monocytogenes serotype 4b (strain CLIP80459), this protein is L-rhamnose isomerase.